A 195-amino-acid chain; its full sequence is MLQPTQTSWVILAGGQASRMGGKDKGLIELNQKPLIEHVIERLSPQTPRILINANRNQDAYSKFGFVFSDQFKDFPGPMGGIHAGLMHAETDWVGFVPCDSPQINTDLVERFCQAVKEDSDILVAHDGDHQQPVFTLYHKRVLPKLTAFLERGDRKIILLYKECNTSYVDFSDSPNCFVNLNTPEELAQFGQLES.

Residues 12–14 (LAG), lysine 25, asparagine 53, aspartate 70, and aspartate 100 each bind GTP. Mg(2+) is bound at residue aspartate 100.

It belongs to the MobA family. In terms of assembly, monomer. Mg(2+) serves as cofactor.

It localises to the cytoplasm. The catalysed reaction is Mo-molybdopterin + GTP + H(+) = Mo-molybdopterin guanine dinucleotide + diphosphate. Its function is as follows. Transfers a GMP moiety from GTP to Mo-molybdopterin (Mo-MPT) cofactor (Moco or molybdenum cofactor) to form Mo-molybdopterin guanine dinucleotide (Mo-MGD) cofactor. The polypeptide is Molybdenum cofactor guanylyltransferase (Vibrio parahaemolyticus serotype O3:K6 (strain RIMD 2210633)).